Reading from the N-terminus, the 1615-residue chain is ABC transporter A family member 4 (1615 aa).

7 helical membrane-spanning segments follow: residues 30 to 50 (ILLP…SMII), 233 to 253 (GVFI…NIVI), 278 to 298 (SIIS…ILSA), 308 to 328 (ITLI…AFIL), 337 to 357 (YAGL…IIIG), 365 to 385 (LKLL…YVWC), and 405 to 425 (YEII…LWYL). The region spanning 182-383 (TQIQTGVDQA…PIAISVANYV (202 aa)) is the ABC transmembrane type-2 domain. An ABC transporter 1 domain is found at 492–727 (ISIRNLRKEF…FGVGYLLTIS (236 aa)). 528 to 535 (GPNGSGKS) is an ATP binding site. The next 7 helical transmembrane spans lie at 855–875 (IKSF…GLIL), 1022–1042 (FVAI…IAAS), 1075–1095 (IWDY…IIAV), 1106–1126 (YISG…LMSF), 1135–1155 (VGAI…ISFI), 1174–1194 (IIEY…ILAI), and 1218–1238 (LLPN…ILLI). In terms of domain architecture, ABC transporter 2 spans 1293-1528 (IIFNNLYKKF…FGSGYSIEVK (236 aa)). Residue 1331–1338 (GLNGCGKS) coordinates ATP.

It belongs to the ABC transporter superfamily. ABCA family.

It localises to the membrane. This chain is ABC transporter A family member 4 (abcA4), found in Dictyostelium discoideum (Social amoeba).